We begin with the raw amino-acid sequence, 166 residues long: Lipoprotein signal peptidase (166 aa).

4 consecutive transmembrane segments (helical) span residues 11-31 (LNLV…LYIL), 42-62 (IYIT…AFGL), 69-89 (VIYN…IFMM), and 99-119 (FFAL…VYTA). Active-site residues include aspartate 122 and aspartate 140. A helical transmembrane segment spans residues 133 to 153 (WFVFNVADIFITIGVFCLILV).

It belongs to the peptidase A8 family.

The protein localises to the cell inner membrane. The catalysed reaction is Release of signal peptides from bacterial membrane prolipoproteins. Hydrolyzes -Xaa-Yaa-Zaa-|-(S,diacylglyceryl)Cys-, in which Xaa is hydrophobic (preferably Leu), and Yaa (Ala or Ser) and Zaa (Gly or Ala) have small, neutral side chains.. The protein operates within protein modification; lipoprotein biosynthesis (signal peptide cleavage). Functionally, this protein specifically catalyzes the removal of signal peptides from prolipoproteins. In Pelagibacter ubique (strain HTCC1062), this protein is Lipoprotein signal peptidase.